Here is a 397-residue protein sequence, read N- to C-terminus: Succinyl-diaminopimelate desuccinylase (397 aa).

His73 serves as a coordination point for Zn(2+). Asp75 is a catalytic residue. Asp106 contacts Zn(2+). Glu140 functions as the Proton acceptor in the catalytic mechanism. Zn(2+) contacts are provided by Glu141, Glu169, and His366.

The protein belongs to the peptidase M20A family. DapE subfamily. As to quaternary structure, homodimer. Requires Zn(2+) as cofactor. Co(2+) serves as cofactor.

The enzyme catalyses N-succinyl-(2S,6S)-2,6-diaminopimelate + H2O = (2S,6S)-2,6-diaminopimelate + succinate. It functions in the pathway amino-acid biosynthesis; L-lysine biosynthesis via DAP pathway; LL-2,6-diaminopimelate from (S)-tetrahydrodipicolinate (succinylase route): step 3/3. Functionally, catalyzes the hydrolysis of N-succinyl-L,L-diaminopimelic acid (SDAP), forming succinate and LL-2,6-diaminopimelate (DAP), an intermediate involved in the bacterial biosynthesis of lysine and meso-diaminopimelic acid, an essential component of bacterial cell walls. This chain is Succinyl-diaminopimelate desuccinylase, found in Rhizobium meliloti (strain 1021) (Ensifer meliloti).